A 241-amino-acid chain; its full sequence is Probable transcriptional regulatory protein RALTA_A0859 (241 aa).

This sequence belongs to the TACO1 family.

It is found in the cytoplasm. The chain is Probable transcriptional regulatory protein RALTA_A0859 from Cupriavidus taiwanensis (strain DSM 17343 / BCRC 17206 / CCUG 44338 / CIP 107171 / LMG 19424 / R1) (Ralstonia taiwanensis (strain LMG 19424)).